Here is a 101-residue protein sequence, read N- to C-terminus: Signal recognition particle 19 kDa protein (101 aa).

It belongs to the SRP19 family. In terms of assembly, part of the signal recognition particle protein translocation system, which is composed of SRP and FtsY. Archaeal SRP consists of a 7S RNA molecule of 300 nucleotides and two protein subunits: SRP54 and SRP19.

The protein resides in the cytoplasm. In terms of biological role, involved in targeting and insertion of nascent membrane proteins into the cytoplasmic membrane. Binds directly to 7S RNA and mediates binding of the 54 kDa subunit of the SRP. In Thermofilum pendens (strain DSM 2475 / Hrk 5), this protein is Signal recognition particle 19 kDa protein.